The primary structure comprises 112 residues: Colipase (112 aa).

The signal sequence occupies residues methionine 1–alanine 17. Positions valine 18–arginine 22 are cleaved as a propeptide — enterostatin, activation peptide. 5 disulfide bridges follow: cysteine 34-cysteine 45, cysteine 40-cysteine 56, cysteine 44-cysteine 78, cysteine 66-cysteine 86, and cysteine 80-cysteine 104.

This sequence belongs to the colipase family. In terms of assembly, forms a 1:1 stoichiometric complex with pancreatic lipase. As to expression, expressed by the pancreas.

Its subcellular location is the secreted. Colipase is a cofactor of pancreatic lipase. It allows the lipase to anchor itself to the lipid-water interface. Without colipase the enzyme is washed off by bile salts, which have an inhibitory effect on the lipase. In terms of biological role, enterostatin has a biological activity as a satiety signal. This is Colipase (CLPS) from Canis lupus familiaris (Dog).